We begin with the raw amino-acid sequence, 450 residues long: Phosphoglucosamine mutase (450 aa).

The active-site Phosphoserine intermediate is the serine 107. The Mg(2+) site is built by serine 107, aspartate 246, aspartate 248, and aspartate 250. Position 107 is a phosphoserine (serine 107).

Belongs to the phosphohexose mutase family. Mg(2+) is required as a cofactor. In terms of processing, activated by phosphorylation.

It carries out the reaction alpha-D-glucosamine 1-phosphate = D-glucosamine 6-phosphate. In terms of biological role, catalyzes the conversion of glucosamine-6-phosphate to glucosamine-1-phosphate. This is Phosphoglucosamine mutase from Dechloromonas aromatica (strain RCB).